The primary structure comprises 331 residues: 6-phosphogluconolactonase (331 aa).

The residue at position 287 (K287) is an N6-acetyllysine.

It belongs to the cycloisomerase 2 family.

It carries out the reaction 6-phospho-D-glucono-1,5-lactone + H2O = 6-phospho-D-gluconate + H(+). The protein operates within carbohydrate degradation; pentose phosphate pathway; D-ribulose 5-phosphate from D-glucose 6-phosphate (oxidative stage): step 2/3. Catalyzes the hydrolysis of 6-phosphogluconolactone to 6-phosphogluconate. In Escherichia coli O157:H7, this protein is 6-phosphogluconolactonase.